The sequence spans 393 residues: Argininosuccinate synthase (393 aa).

Residues 7–15 and A34 each bind ATP; that span reads AYSGGLDTS. 2 residues coordinate L-citrulline: Y85 and S90. G115 contributes to the ATP binding site. The L-aspartate site is built by T117, N121, and D122. N121 provides a ligand contact to L-citrulline. Residues R125, S176, S185, E261, and Y273 each contribute to the L-citrulline site.

This sequence belongs to the argininosuccinate synthase family. Type 1 subfamily. Homotetramer.

It localises to the cytoplasm. The catalysed reaction is L-citrulline + L-aspartate + ATP = 2-(N(omega)-L-arginino)succinate + AMP + diphosphate + H(+). The protein operates within amino-acid biosynthesis; L-arginine biosynthesis; L-arginine from L-ornithine and carbamoyl phosphate: step 2/3. The polypeptide is Argininosuccinate synthase (Ehrlichia chaffeensis (strain ATCC CRL-10679 / Arkansas)).